Here is a 721-residue protein sequence, read N- to C-terminus: MTTSALTEAEAANELMRLARQIAKHNRLYHAEDSPEITDAEYDALVRRNAELEAAFPHLIRPDSPSAQIGHEIAASPLGKVQHEVRMMSLDNAFTDEEVEEFVARVRRFLALPEDAEVVMTAEDKIDGLSCSLRYENGRLVRAATRGDGQVGEDVTANVAHIPDIPQELKAAGLFDIPAVFEIRGEVYMAKDDFLALNARQAEAGEKIFANPRNGAAGSLRQKDASVTASRPLRFLAHGWGAASEVPAATQFEMMRKIADWGVPVSPLLVRCSSAAEMVAHYRDIGEKRASLPYDIDGVVYKVDRLDWQDRLGFVAKAPRWGIAHKFPAERAETTLDAIDIQVGRTGKLTPVGRLKPVLVGGVTVTNVTLHNRDEIGRLGLRVGDRIVLQRAGDVIPQVVENLTREEPRDPYHFPDHCPECGSEAVAEEGEVDVRCTGGLICPAQRVERLKHFVSRAALDIEGLGEKTIIEFFQLGWLESPADIFRLRKRRSEIVGREGWKDKSVDNLLAAIEAKRQPDAARLLFGLGIRHVGAVTARDLMKRFVTLPALREAARQASSAAREGEPANADGAYDPATVTPDSDTAGAEAGRSDALADLLSIDGVGPVVVEALGDFFHEPHNIAVWEDLLSEVSPPPYVVETKDSAVAGKTIVFTGKLETMSRDEAKAQAEALGARTAGSVSAKTDLVVAGPGAGSKLKQAAALGIDVIDEAAWAEIVRQAG.

NAD(+) contacts are provided by residues 39–43 (DAEYD), 89–90 (SL), and Glu-123. Lys-125 (N6-AMP-lysine intermediate) is an active-site residue. 4 residues coordinate NAD(+): Arg-146, Glu-186, Lys-302, and Lys-326. Positions 418, 421, 436, and 442 each coordinate Zn(2+). Residues 556-588 (QASSAAREGEPANADGAYDPATVTPDSDTAGAE) form a disordered region. Residues 641-721 (TKDSAVAGKT…AWAEIVRQAG (81 aa)) form the BRCT domain.

The protein belongs to the NAD-dependent DNA ligase family. LigA subfamily. Mg(2+) is required as a cofactor. Mn(2+) serves as cofactor.

It catalyses the reaction NAD(+) + (deoxyribonucleotide)n-3'-hydroxyl + 5'-phospho-(deoxyribonucleotide)m = (deoxyribonucleotide)n+m + AMP + beta-nicotinamide D-nucleotide.. In terms of biological role, DNA ligase that catalyzes the formation of phosphodiester linkages between 5'-phosphoryl and 3'-hydroxyl groups in double-stranded DNA using NAD as a coenzyme and as the energy source for the reaction. It is essential for DNA replication and repair of damaged DNA. This is DNA ligase from Novosphingobium aromaticivorans (strain ATCC 700278 / DSM 12444 / CCUG 56034 / CIP 105152 / NBRC 16084 / F199).